The sequence spans 37 residues: Esculentin-2Ra (37 aa).

A disulfide bond links C31 and C37.

Expressed by the skin glands.

Its subcellular location is the secreted. Its function is as follows. Antimicrobial peptide. In Pelophylax ridibundus (Marsh frog), this protein is Esculentin-2Ra.